The chain runs to 764 residues: Probable 5-methyltetrahydropteroyltriglutamate--homocysteine methyltransferase (764 aa).

5-methyltetrahydropteroyltri-L-glutamate contacts are provided by lysine 19 and asparagine 126. At serine 182 the chain carries Phosphoserine. Residue threonine 441 is modified to Phosphothreonine. Residues 442–444 (IGS) and glutamate 495 each bind L-homocysteine. L-methionine contacts are provided by residues 442 to 444 (IGS) and glutamate 495. Residues aspartate 500, tyrosine 523, 526 to 527 (RC), and tryptophan 572 contribute to the 5-methyltetrahydropteroyltri-L-glutamate site. L-homocysteine is bound at residue aspartate 610. Aspartate 610 lines the L-methionine pocket. The Zn(2+) site is built by histidine 652, cysteine 654, and glutamate 676. Histidine 703 acts as the Proton donor in catalysis. Residue cysteine 735 coordinates Zn(2+).

The protein belongs to the vitamin-B12 independent methionine synthase family. Zn(2+) is required as a cofactor.

It is found in the nucleus. The protein localises to the cytoplasm. It carries out the reaction 5-methyltetrahydropteroyltri-L-glutamate + L-homocysteine = tetrahydropteroyltri-L-glutamate + L-methionine. It participates in amino-acid biosynthesis; L-methionine biosynthesis via de novo pathway; L-methionine from L-homocysteine (MetE route): step 1/1. Functionally, catalyzes the transfer of a methyl group from 5-methyltetrahydrofolate to homocysteine resulting in methionine formation. The chain is Probable 5-methyltetrahydropteroyltriglutamate--homocysteine methyltransferase (met26) from Schizosaccharomyces pombe (strain 972 / ATCC 24843) (Fission yeast).